Consider the following 501-residue polypeptide: 7-alpha-hydroxycholest-4-en-3-one 12-alpha-hydroxylase (501 aa).

Residues 1 to 21 (MVLWGPVLGALLVVIAGYLCL) traverse the membrane as a helical segment. The residue at position 326 (serine 326) is a Phosphoserine. Cysteine 440 provides a ligand contact to heme.

The protein belongs to the cytochrome P450 family. It depends on heme as a cofactor. In terms of tissue distribution, liver.

The protein localises to the endoplasmic reticulum membrane. It localises to the microsome membrane. It carries out the reaction 7alpha-hydroxycholest-4-en-3-one + reduced [NADPH--hemoprotein reductase] + O2 = 7alpha,12alpha-dihydroxycholest-4-en-3-one + oxidized [NADPH--hemoprotein reductase] + H2O + H(+). It catalyses the reaction 5beta-cholestane-3alpha,7alpha-diol + reduced [NADPH--hemoprotein reductase] + O2 = 5beta-cholestane-3alpha,7alpha,12alpha-triol + oxidized [NADPH--hemoprotein reductase] + H2O + H(+). The enzyme catalyses chenodeoxycholate + reduced [NADPH--hemoprotein reductase] + O2 = cholate + oxidized [NADPH--hemoprotein reductase] + H2O + H(+). The protein operates within lipid metabolism; bile acid biosynthesis. A cytochrome P450 monooxygenase involved in primary bile acid biosynthesis. Catalyzes the 12alpha-hydroxylation of 7alpha-hydroxy-4-cholesten-3-one, an intermediate metabolite in cholic acid biosynthesis. Controls biliary balance of cholic acid and chenodeoxycholic acid, ultimately regulating the intestinal absorption of dietary lipids. Mechanistically, uses molecular oxygen inserting one oxygen atom into a substrate, and reducing the second into a water molecule, with two electrons provided by NADPH via cytochrome P450 reductase (CPR; NADPH--hemoprotein reductase). This Homo sapiens (Human) protein is 7-alpha-hydroxycholest-4-en-3-one 12-alpha-hydroxylase.